The following is a 382-amino-acid chain: Lipid-A-disaccharide synthase (382 aa).

It belongs to the LpxB family.

It carries out the reaction 2-N,3-O-bis[(3R)-3-hydroxytetradecanoyl]-alpha-D-glucosaminyl 1-phosphate + UDP-2-N,3-O-bis[(3R)-3-hydroxytetradecanoyl]-alpha-D-glucosamine = lipid A disaccharide (E. coli) + UDP + H(+). It catalyses the reaction a lipid X + a UDP-2-N,3-O-bis[(3R)-3-hydroxyacyl]-alpha-D-glucosamine = a lipid A disaccharide + UDP + H(+). It participates in glycolipid biosynthesis; lipid IV(A) biosynthesis; lipid IV(A) from (3R)-3-hydroxytetradecanoyl-[acyl-carrier-protein] and UDP-N-acetyl-alpha-D-glucosamine: step 5/6. Condensation of UDP-2,3-diacylglucosamine and 2,3-diacylglucosamine-1-phosphate to form lipid A disaccharide, a precursor of lipid A, a phosphorylated glycolipid that anchors the lipopolysaccharide to the outer membrane of the cell. This chain is Lipid-A-disaccharide synthase, found in Citrobacter koseri (strain ATCC BAA-895 / CDC 4225-83 / SGSC4696).